Reading from the N-terminus, the 642-residue chain is Pentatricopeptide repeat-containing protein At3g16010 (642 aa).

PPR repeat units lie at residues 125-159 (DCST…TYVS), 161-195 (SPAV…KCKP), 196-230 (TSST…GDCF), 232-266 (DTIT…CMQP), 267-301 (TEKI…GCSP), 302-336 (TVYT…GLTP), 337-371 (DVVF…RCTP), 372-407 (TVVS…SVSP), 408-442 (SEFT…GFPP), 443-473 (CPAA…LKEN), 478-512 (SSRV…GSGP), 513-547 (DVYA…GCRA), 548-582 (DINS…GIKP), and 583-617 (DGVT…GFEY).

This sequence belongs to the PPR family. P subfamily.

The sequence is that of Pentatricopeptide repeat-containing protein At3g16010 from Arabidopsis thaliana (Mouse-ear cress).